We begin with the raw amino-acid sequence, 391 residues long: Thyroid hormone receptor alpha-B (391 aa).

Residues 1 to 32 (MAQWPEKEEEEQPMFGEEYTGYIPSYLEKDEP) are modulating. NR C4-type zinc fingers lie at residues 33 to 53 (CVVC…CEGC) and 71 to 95 (CKYD…FKKC). Positions 33 to 100 (CVVCGDKATG…RFKKCIAVGM (68 aa)) form a DNA-binding region, nuclear receptor. The region spanning 143–388 (AEWELIRMVT…PPLFLEVFED (246 aa)) is the NR LBD domain.

The protein belongs to the nuclear hormone receptor family. NR1 subfamily.

It localises to the nucleus. Its function is as follows. High affinity receptor for triiodothyronine. The polypeptide is Thyroid hormone receptor alpha-B (thra2) (Paralichthys olivaceus (Bastard halibut)).